Reading from the N-terminus, the 493-residue chain is Probable plastidic glucose transporter 2 (493 aa).

The segment covering Met1–Arg14 has biased composition (polar residues). A disordered region spans residues Met1–Ile24. A run of 12 helical transmembrane segments spans residues Leu52–Val72, Leu94–Ala114, Leu128–Leu148, Phe151–Val171, Ser182–Val202, Val211–Ala231, Val293–Phe313, Leu329–Met349, Leu356–Thr376, Gly392–Leu412, Ala424–Leu444, and Leu450–Val470.

This sequence belongs to the major facilitator superfamily. Sugar transporter (TC 2.A.1.1) family.

The protein localises to the plastid. It localises to the chloroplast membrane. In terms of biological role, may be involved in the efflux of glucose towards the cytosol. This is Probable plastidic glucose transporter 2 from Arabidopsis thaliana (Mouse-ear cress).